The sequence spans 284 residues: Efem/EfeO family lipoprotein (284 aa).

The signal sequence occupies residues methionine 1–alanine 17. Cysteine 18 carries the N-palmitoyl cysteine lipid modification. Cysteine 18 carries S-diacylglycerol cysteine lipidation.

The protein belongs to the EfeM/EfeO family.

It is found in the cell membrane. This Staphylococcus aureus (strain NCTC 8325 / PS 47) protein is Efem/EfeO family lipoprotein.